The primary structure comprises 453 residues: NADH-quinone oxidoreductase subunit D (453 aa).

Basic and acidic residues predominate over residues 1–21 (MKDTETRPGRHRAPEPAHPEQ). Positions 1-30 (MKDTETRPGRHRAPEPAHPEQPDTTGDTVV) are disordered.

The protein belongs to the complex I 49 kDa subunit family. In terms of assembly, NDH-1 is composed of 14 different subunits. Subunits NuoB, C, D, E, F, and G constitute the peripheral sector of the complex.

It localises to the cell membrane. It carries out the reaction a quinone + NADH + 5 H(+)(in) = a quinol + NAD(+) + 4 H(+)(out). NDH-1 shuttles electrons from NADH, via FMN and iron-sulfur (Fe-S) centers, to quinones in the respiratory chain. The immediate electron acceptor for the enzyme in this species is believed to be a menaquinone. Couples the redox reaction to proton translocation (for every two electrons transferred, four hydrogen ions are translocated across the cytoplasmic membrane), and thus conserves the redox energy in a proton gradient. The polypeptide is NADH-quinone oxidoreductase subunit D (Nocardia farcinica (strain IFM 10152)).